We begin with the raw amino-acid sequence, 393 residues long: 4-hydroxyphenylpyruvate dioxygenase (393 aa).

2 consecutive VOC domains span residues 17 to 148 and 179 to 339; these read AFDH…LLER and FLDH…IFSK. Fe cation contacts are provided by His-182, His-267, and Glu-350.

The protein belongs to the 4HPPD family. Fe cation is required as a cofactor. As to expression, expressed in the hypodermis and intestine.

The enzyme catalyses 3-(4-hydroxyphenyl)pyruvate + O2 = homogentisate + CO2. Its pathway is amino-acid degradation; L-phenylalanine degradation; acetoacetate and fumarate from L-phenylalanine: step 3/6. In terms of biological role, key enzyme in the degradation of tyrosine. This Caenorhabditis elegans protein is 4-hydroxyphenylpyruvate dioxygenase.